A 337-amino-acid chain; its full sequence is MKISAALILSSLSSVAFSAPAPAPADSHHEDHHKDEKPAVVTVTQYIDSNAATSTVESAATTTTLSSSEKDTSEQKRDGGFQDGTVKCSDFPSVNGIVSLDWLGFGGWASVMDMDANTSSECKDGYYCSYACEPGMSKTQWPSDQPSDGKSVGGLYCKNGYLYRTNTDTSDLCSTDETSAKAINKKSDSIALCRTDYPGSENMVIPTVVDGGDSQPISVVDEDTYYQWQGKKTSAQYYINNAGVSAEDGCIWGTSGSDVGNWAPLVLGAGSTNGETYLSLIPNPNSNQAANFNVKIVASDGANVQGSCAYEDGSFTGDGSDGCTVSVLSGSAEFVFY.

Residues 57 to 67 (ESAATTTTLSS) are compositionally biased toward low complexity. The disordered stretch occupies residues 57 to 84 (ESAATTTTLSSSEKDTSEQKRDGGFQDG). The span at 68–80 (SEKDTSEQKRDGG) shows a compositional bias: basic and acidic residues.

This sequence belongs to the SUN family.

The protein resides in the mitochondrion. In terms of biological role, involved in the mitochondrial expression of subunits 6 and 8 of the F0-F1 ATP synthase. The polypeptide is Beta-glucosidase-like protein NCA3, mitochondrial (NCA3) (Saccharomyces cerevisiae (strain ATCC 204508 / S288c) (Baker's yeast)).